Reading from the N-terminus, the 189-residue chain is Chitin synthase 1 (189 aa).

It belongs to the chitin synthase family. Class I subfamily.

The protein localises to the cell membrane. The catalysed reaction is [(1-&gt;4)-N-acetyl-beta-D-glucosaminyl](n) + UDP-N-acetyl-alpha-D-glucosamine = [(1-&gt;4)-N-acetyl-beta-D-glucosaminyl](n+1) + UDP + H(+). Functionally, polymerizes chitin, a structural polymer of the cell wall and septum, by transferring the sugar moiety of UDP-GlcNAc to the non-reducing end of the growing chitin polymer. The protein is Chitin synthase 1 (CHS1) of Rhinocladiella atrovirens.